Here is a 338-residue protein sequence, read N- to C-terminus: Glycerol-1-phosphate dehydrogenase [NAD(P)+] (338 aa).

NAD(+) is bound by residues 81–85 (GRPLD) and 103–106 (TSAS). Position 108 (Asp108) interacts with substrate. Ser112 contributes to the NAD(+) binding site. Residue Asp157 coordinates substrate. Asp157 and His238 together coordinate Zn(2+). His242 lines the substrate pocket. Residue His256 participates in Zn(2+) binding.

This sequence belongs to the glycerol-1-phosphate dehydrogenase family. Homodimer. The cofactor is Zn(2+).

The protein resides in the cytoplasm. The enzyme catalyses sn-glycerol 1-phosphate + NAD(+) = dihydroxyacetone phosphate + NADH + H(+). It carries out the reaction sn-glycerol 1-phosphate + NADP(+) = dihydroxyacetone phosphate + NADPH + H(+). The protein operates within membrane lipid metabolism; glycerophospholipid metabolism. Functionally, catalyzes the NAD(P)H-dependent reduction of dihydroxyacetonephosphate (DHAP or glycerone phosphate) to glycerol 1-phosphate (G1P). The G1P thus generated is used as the glycerophosphate backbone of phospholipids in the cellular membranes of Archaea. The chain is Glycerol-1-phosphate dehydrogenase [NAD(P)+] from Pyrobaculum calidifontis (strain DSM 21063 / JCM 11548 / VA1).